The following is a 263-amino-acid chain: Stress-response A/B barrel domain-containing protein UP3 (263 aa).

2 consecutive Stress-response A/B barrel domains span residues 49-142 (IEHI…AVDW) and 158-252 (VAKL…VVEF). The Peroxisomal targeting signal motif lies at 261–263 (SSL).

In terms of assembly, homodimer.

The protein resides in the peroxisome. Its function is as follows. Involved in stress response. The chain is Stress-response A/B barrel domain-containing protein UP3 from Arabidopsis thaliana (Mouse-ear cress).